Reading from the N-terminus, the 3140-residue chain is Genome polyprotein (3140 aa).

The Peptidase S30 domain occupies 165 to 308 (RMSEASLQLF…KEQSNEIVHY (144 aa)). Active-site for P1 proteinase activity residues include His-216, Asp-225, and Ser-259. Positions 360-363 (KITC) match the Involved in interaction with stylet and aphid transmission motif. Residues 618 to 620 (PTK) carry the Involved in virions binding and aphid transmission motif. The Peptidase C6 domain occupies 644–766 (MFIAKAGYCY…DSSMKTYLVG (123 aa)). Residues Cys-652 and His-725 each act as for helper component proteinase activity in the active site. The Helicase ATP-binding domain maps to 1240–1392 (EVMHGSHQDI…TQKEVKVIVE (153 aa)). 1253-1260 (GAVGSGKS) contacts ATP. Residues 1342–1345 (DECH) carry the DECH box motif. Positions 1411 to 1570 (DILKHGVNVL…GLPVMTNGVS (160 aa)) constitute a Helicase C-terminal domain. Residues 1897–1904 (KKGKSKGK) carry the Nuclear localization signal motif. Tyr-1919 bears the O-(5'-phospho-RNA)-tyrosine mark. The Peptidase C4 domain maps to 2050–2268 (SKSLFRGLRD…VCWGSLELKR (219 aa)). Catalysis depends on for nuclear inclusion protein A activity residues His-2095, Asp-2130, and Cys-2200. A RdRp catalytic domain is found at 2534 to 2658 (WIYCDADGSQ…AVHPAYESMY (125 aa)). A disordered region spans residues 2883 to 2905 (GVYGNEDASPSTSNTLVNTGRDR). A compositionally biased stretch (polar residues) spans 2890 to 2900 (ASPSTSNTLVN). Residues Ser-2891, Ser-2911, and Ser-2928 each carry the phosphoserine modification. Residues Thr-3064 and Thr-3123 each carry the phosphothreonine modification.

This sequence belongs to the potyviridae genome polyprotein family. Interacts with host eIF4E protein (via cap-binding region); this interaction mediates the translation of the VPg-viral RNA conjugates. Part of a complex that comprises VPg, RNA, host EIF4E and EIF4G; this interaction mediates the translation of the VPg-viral RNA conjugates. Post-translationally, VPg is uridylylated by the polymerase and is covalently attached to the 5'-end of the genomic RNA. This uridylylated form acts as a nucleotide-peptide primer for the polymerase. Potyviral RNA is expressed as two polyproteins which undergo post-translational proteolytic processing. Genome polyprotein is processed by NIa-pro, P1 and HC-pro proteinases resulting in the production of at least ten individual proteins. P3N-PIPO polyprotein is cleaved by P1 and HC-pro proteinases resulting in the production of three individual proteins. The P1 proteinase and the HC-pro cleave only their respective C-termini autocatalytically. 6K1 is essential for proper proteolytic separation of P3 from CI.

It is found in the host cytoplasmic vesicle. The protein localises to the host nucleus. Its subcellular location is the virion. The catalysed reaction is RNA(n) + a ribonucleoside 5'-triphosphate = RNA(n+1) + diphosphate. The enzyme catalyses Hydrolyzes glutaminyl bonds, and activity is further restricted by preferences for the amino acids in P6 - P1' that vary with the species of potyvirus, e.g. Glu-Xaa-Xaa-Tyr-Xaa-Gln-|-(Ser or Gly) for the enzyme from tobacco etch virus. The natural substrate is the viral polyprotein, but other proteins and oligopeptides containing the appropriate consensus sequence are also cleaved.. It catalyses the reaction Hydrolyzes a Gly-|-Gly bond at its own C-terminus, commonly in the sequence -Tyr-Xaa-Val-Gly-|-Gly, in the processing of the potyviral polyprotein.. Required for aphid transmission and also has proteolytic activity. Only cleaves a Gly-Gly dipeptide at its own C-terminus. Interacts with virions and aphid stylets. Acts as a suppressor of RNA-mediated gene silencing, also known as post-transcriptional gene silencing (PTGS), a mechanism of plant viral defense that limits the accumulation of viral RNAs. May have RNA-binding activity. Its function is as follows. Has helicase activity. It may be involved in replication. In terms of biological role, indispensable for virus replication. Reduces the abundance of host transcripts related to jasmonic acid biosynthesis therefore altering the host defenses. In order to increase its own stability, decreases host protein degradation pathways. Functionally, indispensable for virus replication. Mediates the cap-independent, EIF4E-dependent translation of viral genomic RNAs. Binds to the cap-binding site of host EIF4E and thus interferes with the host EIF4E-dependent mRNA export and translation. VPg-RNA directly binds EIF4E and is a template for transcription. Also forms trimeric complexes with EIF4E-EIF4G, which are templates for translation. Its function is as follows. Has RNA-binding and proteolytic activities. In terms of biological role, an RNA-dependent RNA polymerase that plays an essential role in the virus replication. Functionally, involved in aphid transmission, cell-to-cell and systemis movement, encapsidation of the viral RNA and in the regulation of viral RNA amplification. The sequence is that of Genome polyprotein from Prunus armeniaca (Apricot).